Consider the following 367-residue polypeptide: Holliday junction branch migration complex subunit RuvB (367 aa).

The tract at residues 2 to 196 is large ATPase domain (RuvB-L); the sequence is TDEPLTDRPP…FGFTARLDFY (195 aa). Residues Leu35, Arg36, Gly77, Lys80, Thr81, Thr82, 143–145, Arg186, Tyr196, and Arg233 contribute to the ATP site; that span reads EDF. Residue Thr81 participates in Mg(2+) binding. The tract at residues 197–267 is small ATPAse domain (RuvB-S); the sequence is EPADLERIVH…VAQAALAVYE (71 aa). The interval 270–367 is head domain (RuvB-H); the sequence is EHGLDRLDRA…IDRDAGEPTA (98 aa). Arg325 and Arg330 together coordinate DNA.

Belongs to the RuvB family. As to quaternary structure, homohexamer. Forms an RuvA(8)-RuvB(12)-Holliday junction (HJ) complex. HJ DNA is sandwiched between 2 RuvA tetramers; dsDNA enters through RuvA and exits via RuvB. An RuvB hexamer assembles on each DNA strand where it exits the tetramer. Each RuvB hexamer is contacted by two RuvA subunits (via domain III) on 2 adjacent RuvB subunits; this complex drives branch migration. In the full resolvosome a probable DNA-RuvA(4)-RuvB(12)-RuvC(2) complex forms which resolves the HJ.

The protein localises to the cytoplasm. The enzyme catalyses ATP + H2O = ADP + phosphate + H(+). In terms of biological role, the RuvA-RuvB-RuvC complex processes Holliday junction (HJ) DNA during genetic recombination and DNA repair, while the RuvA-RuvB complex plays an important role in the rescue of blocked DNA replication forks via replication fork reversal (RFR). RuvA specifically binds to HJ cruciform DNA, conferring on it an open structure. The RuvB hexamer acts as an ATP-dependent pump, pulling dsDNA into and through the RuvAB complex. RuvB forms 2 homohexamers on either side of HJ DNA bound by 1 or 2 RuvA tetramers; 4 subunits per hexamer contact DNA at a time. Coordinated motions by a converter formed by DNA-disengaged RuvB subunits stimulates ATP hydrolysis and nucleotide exchange. Immobilization of the converter enables RuvB to convert the ATP-contained energy into a lever motion, pulling 2 nucleotides of DNA out of the RuvA tetramer per ATP hydrolyzed, thus driving DNA branch migration. The RuvB motors rotate together with the DNA substrate, which together with the progressing nucleotide cycle form the mechanistic basis for DNA recombination by continuous HJ branch migration. Branch migration allows RuvC to scan DNA until it finds its consensus sequence, where it cleaves and resolves cruciform DNA. The chain is Holliday junction branch migration complex subunit RuvB from Acidothermus cellulolyticus (strain ATCC 43068 / DSM 8971 / 11B).